The sequence spans 403 residues: GPI-N-acetylgalactosamine transferase PGAP4 (403 aa).

The Cytoplasmic portion of the chain corresponds to 1–22 (MSTSTSPAAMLLRRLRRLSWGS). A helical transmembrane segment spans residues 23–43 (TAVQLFILTVVTFGLLAPLAC). At 44 to 259 (HRLLHSYFYL…RLQHYTNPEP (216 aa)) the chain is on the lumenal side. Position 109 (Val-109) interacts with UDP-N-acetyl-alpha-D-galactosamine. Intrachain disulfides connect Cys-132-Cys-136 and Cys-144-Cys-194. The DXD motif signature appears at 211-213 (EDD). The helical transmembrane segment at 260–280 (MRILEWVGVGMLLGPLLTWIY) threads the bilayer. The Cytoplasmic segment spans residues 281 to 287 (MRFASRP). The chain crosses the membrane as a helical span at residues 288 to 308 (GFSWPVMLFFSLYSMGLVELV). Residues 309–403 (GRHYFLELRR…LRYNFHPSLL (95 aa)) lie on the Lumenal side of the membrane. The cysteines at positions 332 and 333 are disulfide-linked. 3 residues coordinate UDP-N-acetyl-alpha-D-galactosamine: Thr-334, Pro-335, and Lys-362.

This sequence belongs to the PGAP4 family. Post-translationally, glycosylated.

The protein localises to the golgi apparatus membrane. In terms of biological role, golgi-resident glycosylphosphatidylinositol (GPI)-N-acetylgalactosamine transferase that catalyzes the N-acetyl-beta-D-galactosamine transfer from an UDP-N-acetyl-alpha-D-galactosamine to the 4-OH-position of first mannose of the glycosylphosphatidylinositol (GPI) of a GPI-anchored protein (GPI-AP). This modification occurs after the fatty acid remodeling step of the GPI-anchor maturation. The polypeptide is GPI-N-acetylgalactosamine transferase PGAP4 (Pongo abelii (Sumatran orangutan)).